The primary structure comprises 404 residues: Probable cysteine desulfurase (404 aa).

Lys-226 carries the post-translational modification N6-(pyridoxal phosphate)lysine. Cys-363 functions as the Cysteine persulfide intermediate in the catalytic mechanism.

The protein belongs to the class-V pyridoxal-phosphate-dependent aminotransferase family. Csd subfamily. Requires pyridoxal 5'-phosphate as cofactor.

It carries out the reaction (sulfur carrier)-H + L-cysteine = (sulfur carrier)-SH + L-alanine. Its function is as follows. Catalyzes the removal of elemental sulfur and selenium atoms from L-cysteine, L-cystine, L-selenocysteine, and L-selenocystine to produce L-alanine. The sequence is that of Probable cysteine desulfurase (csd) from Vibrio cholerae serotype O1 (strain ATCC 39315 / El Tor Inaba N16961).